Reading from the N-terminus, the 623-residue chain is DNA mismatch repair protein MutL (623 aa).

A compositionally biased stretch (polar residues) spans 353-368; it reads AQQSAPRPANSYSPAS. The segment at 353-389 is disordered; the sequence is AQQSAPRPANSYSPASWRTAPPAPRSEWSPQTAHPAH.

This sequence belongs to the DNA mismatch repair MutL/HexB family.

This protein is involved in the repair of mismatches in DNA. It is required for dam-dependent methyl-directed DNA mismatch repair. May act as a 'molecular matchmaker', a protein that promotes the formation of a stable complex between two or more DNA-binding proteins in an ATP-dependent manner without itself being part of a final effector complex. This is DNA mismatch repair protein MutL from Brucella melitensis biotype 1 (strain ATCC 23456 / CCUG 17765 / NCTC 10094 / 16M).